We begin with the raw amino-acid sequence, 461 residues long: MAKHERGLRFQPTGGSKAPQIPTGKKQRLSIERLANDGRGIAFFEGKTWFVLGALAGEEVEARVLGAHGKVVEARTERVFSASELRRPAPCQHAGRCGGCSVQHLPHNEQLALKQRMLAEQLSRVAGAEPEEWAAPLTGPEFGYRRRARIAVRWDSKAKKLEVGFRAAGSQDIVAISECPVLVQPLQPIMTRLPEMLRRLSKPQALGHVELFSGSSLAVLLRHMAPLSEADLTILKDFCAFHEAQLWLHGEGEPQPVDDAQSLGYHLEQWDLQLAYRPGDFIQVNAGVNEAMVAQALEWLKPTADERVLDLFCGLGNFALPLAKAAREVVAVEGVQTMVDRAAANAASNNLHNTKFFQADLSQPLTDAEWIGNGFSAVLLDPPRDGAFEVVRKLAALGAKRLVYVSCNPATLARDTVELIKQGYRLKRAGILDMFPQTAHVEAMALFEASQDGSSDPTGRP.

A disordered region spans residues 1–26 (MAKHERGLRFQPTGGSKAPQIPTGKK). Residues 20–78 (QIPTGKKQRLSIERLANDGRGIAFFEGKTWFVLGALAGEEVEARVLGAHGKVVEARTER) form the TRAM domain. [4Fe-4S] cluster contacts are provided by C91, C97, C100, and C179. S-adenosyl-L-methionine-binding residues include Q283, F312, N317, E333, D360, and D381. C407 serves as the catalytic Nucleophile.

Belongs to the class I-like SAM-binding methyltransferase superfamily. RNA M5U methyltransferase family. RlmD subfamily.

The enzyme catalyses uridine(1939) in 23S rRNA + S-adenosyl-L-methionine = 5-methyluridine(1939) in 23S rRNA + S-adenosyl-L-homocysteine + H(+). Its function is as follows. Catalyzes the formation of 5-methyl-uridine at position 1939 (m5U1939) in 23S rRNA. This is 23S rRNA (uracil(1939)-C(5))-methyltransferase RlmD from Pseudomonas fluorescens (strain Pf0-1).